The following is a 421-amino-acid chain: Gamma-glutamyl phosphate reductase (421 aa).

It belongs to the gamma-glutamyl phosphate reductase family.

Its subcellular location is the cytoplasm. The catalysed reaction is L-glutamate 5-semialdehyde + phosphate + NADP(+) = L-glutamyl 5-phosphate + NADPH + H(+). Its pathway is amino-acid biosynthesis; L-proline biosynthesis; L-glutamate 5-semialdehyde from L-glutamate: step 2/2. Functionally, catalyzes the NADPH-dependent reduction of L-glutamate 5-phosphate into L-glutamate 5-semialdehyde and phosphate. The product spontaneously undergoes cyclization to form 1-pyrroline-5-carboxylate. The sequence is that of Gamma-glutamyl phosphate reductase from Brucella suis biovar 1 (strain 1330).